A 357-amino-acid chain; its full sequence is Dihydroorotate dehydrogenase (quinone) (357 aa).

FMN contacts are provided by residues 66 to 70 (AGFDK) and T90. K70 is a substrate binding site. Residue 115–119 (NRMGF) participates in substrate binding. 2 residues coordinate FMN: N143 and N176. Residue N176 participates in substrate binding. The Nucleophile role is filled by S179. N181 is a substrate binding site. K212 and T240 together coordinate FMN. A substrate-binding site is contributed by 241–242 (NT). FMN contacts are provided by residues G264, G293, and 314–315 (YT).

The protein belongs to the dihydroorotate dehydrogenase family. Type 2 subfamily. Monomer. FMN is required as a cofactor.

The protein resides in the cell membrane. It carries out the reaction (S)-dihydroorotate + a quinone = orotate + a quinol. The protein operates within pyrimidine metabolism; UMP biosynthesis via de novo pathway; orotate from (S)-dihydroorotate (quinone route): step 1/1. In terms of biological role, catalyzes the conversion of dihydroorotate to orotate with quinone as electron acceptor. The polypeptide is Dihydroorotate dehydrogenase (quinone) (Mycobacterium tuberculosis (strain ATCC 25177 / H37Ra)).